The following is a 343-amino-acid chain: Fructose-1,6-bisphosphatase class 1 (343 aa).

4 residues coordinate Mg(2+): Glu-99, Asp-121, Leu-123, and Asp-124. Residues 124–127, Asn-218, Tyr-250, and Lys-283 each bind substrate; that span reads DGSS. Glu-289 contacts Mg(2+).

It belongs to the FBPase class 1 family. In terms of assembly, homotetramer. Mg(2+) serves as cofactor.

It is found in the cytoplasm. It carries out the reaction beta-D-fructose 1,6-bisphosphate + H2O = beta-D-fructose 6-phosphate + phosphate. It participates in carbohydrate biosynthesis; gluconeogenesis. The protein is Fructose-1,6-bisphosphatase class 1 of Leptospira biflexa serovar Patoc (strain Patoc 1 / Ames).